Reading from the N-terminus, the 717-residue chain is SAGA factor-like TAF6 (717 aa).

The segment at 123 to 204 (KSYAGFDPRS…VPPMLGAMDS (82 aa)) is sufficient for interaction with Taf9.

Belongs to the TAF6 family. In terms of assembly, component of the Spt-Ada-Gcn5 acetyltransferase (SAGA) complex consisting of wda/Taf5L, Saf6, Taf9, Taf10b, Taf12, Ada1, Spt3, Spt7, Spt20, Sf3b3, Sf3b5, Nipped-A/Tra1, a histone acetyltransferase (HAT) module made up of Gcn5, Ada2b (Isoform B), Ada3 and Sgf29, and a deubiquitinase (DUB) module made up of not/nonstop, Sgf11 and e(y)2 tethered to SAGA by Atxn7; not essential for SAGA complex assembly, histone-modifying activity or chromosomal recruitment. Interacts (via N-terminal histone-fold domain) with Taf9 (via N-terminal histone-fold domain); the interaction is probably direct. Probably forms a histone-like heterooctamer structure with Taf9, Taf12 and Taf10b.

It localises to the nucleus. Its subcellular location is the chromosome. In terms of biological role, component of the transcription regulatory complex SAGA, a multiprotein complex that activates transcription by remodeling chromatin and mediating histone acetylation and deubiquitination. The SAGA complex predominantly acetylates histone H3. Involved in SAGA complex coactivator function but not essential for SAGA complex assembly, histone-modifying activity or chromosomal recruitment. Required for oogenesis; involved in transcriptional activation. The protein is SAGA factor-like TAF6 of Drosophila melanogaster (Fruit fly).